Consider the following 380-residue polypeptide: Cell division protein FtsZ (380 aa).

Residues 27–31, 119–121, Glu-150, and Asn-189 contribute to the GTP site; these read GAGNN and GTG.

This sequence belongs to the FtsZ family. In terms of assembly, homodimer. Polymerizes to form a dynamic ring structure in a strictly GTP-dependent manner. Interacts directly with several other division proteins.

The protein localises to the cytoplasm. Essential cell division protein that forms a contractile ring structure (Z ring) at the future cell division site. The regulation of the ring assembly controls the timing and the location of cell division. One of the functions of the FtsZ ring is to recruit other cell division proteins to the septum to produce a new cell wall between the dividing cells. Binds GTP and shows GTPase activity. The sequence is that of Cell division protein FtsZ from Mycoplasma pneumoniae (strain ATCC 29342 / M129 / Subtype 1) (Mycoplasmoides pneumoniae).